The chain runs to 221 residues: ATP-dependent Clp protease proteolytic subunit 1, mitochondrial (221 aa).

The N-terminal 25 residues, 1–25 (MLRRLVTSSLSASRSMSASVQSRVG), are a transit peptide targeting the mitochondrion. Ser-120 acts as the Nucleophile in catalysis. Residue His-145 is part of the active site.

Belongs to the peptidase S14 family. In terms of assembly, tetradecamer that assembles into a two heptameric rings with a central cavity. In terms of tissue distribution, expressed in the intestine.

The protein resides in the mitochondrion matrix. It carries out the reaction Hydrolysis of proteins to small peptides in the presence of ATP and magnesium. alpha-casein is the usual test substrate. In the absence of ATP, only oligopeptides shorter than five residues are hydrolyzed (such as succinyl-Leu-Tyr-|-NHMec, and Leu-Tyr-Leu-|-Tyr-Trp, in which cleavage of the -Tyr-|-Leu- and -Tyr-|-Trp bonds also occurs).. Its function is as follows. Clp cleaves peptides in various proteins in a process that requires ATP hydrolysis. Clp may be responsible for a fairly general and central housekeeping function rather than for the degradation of specific substrates. This chain is ATP-dependent Clp protease proteolytic subunit 1, mitochondrial (clpp-1), found in Caenorhabditis elegans.